We begin with the raw amino-acid sequence, 122 residues long: Small ribosomal subunit protein uS13 (122 aa).

The interval 98–122 (VRGQRTHTNARTRKGPAKAIAGKKK) is disordered.

It belongs to the universal ribosomal protein uS13 family. Part of the 30S ribosomal subunit. Forms a loose heterodimer with protein S19. Forms two bridges to the 50S subunit in the 70S ribosome.

Functionally, located at the top of the head of the 30S subunit, it contacts several helices of the 16S rRNA. In the 70S ribosome it contacts the 23S rRNA (bridge B1a) and protein L5 of the 50S subunit (bridge B1b), connecting the 2 subunits; these bridges are implicated in subunit movement. Contacts the tRNAs in the A and P-sites. This Jannaschia sp. (strain CCS1) protein is Small ribosomal subunit protein uS13.